The sequence spans 1124 residues: Ras-associating and dilute domain-containing protein (1124 aa).

Residues A61–E164 enclose the Ras-associating domain. The disordered stretch occupies residues Y226–V253. A compositionally biased stretch (basic and acidic residues) spans S238–G252. One can recognise an FHA domain in the interval H284–I342. Residues A516–H809 form the Dilute domain. Disordered regions lie at residues T850–N942 and P960–S982. The span at P866–A876 shows a compositional bias: pro residues. Over residues A903–T912 the composition is skewed to basic and acidic residues. A compositionally biased stretch (polar residues) spans A926 to I937. A compositionally biased stretch (basic and acidic residues) spans P960–H969. In terms of domain architecture, PDZ spans V1027–D1112.

Belongs to the RADIL family. As to quaternary structure, interacts with RAP1A; in a GTP-dependent manner. Ubiquitously expressed and enriched in the anterior part of the embryos.

Downstream effector of Rap required for cell adhesion and migration of neural crest precursors during development. This is Ras-associating and dilute domain-containing protein (radil) from Danio rerio (Zebrafish).